We begin with the raw amino-acid sequence, 67 residues long: Large ribosomal subunit protein uL30 (67 aa).

This sequence belongs to the universal ribosomal protein uL30 family. In terms of assembly, part of the 50S ribosomal subunit.

This chain is Large ribosomal subunit protein uL30, found in Thermotoga maritima (strain ATCC 43589 / DSM 3109 / JCM 10099 / NBRC 100826 / MSB8).